Here is a 624-residue protein sequence, read N- to C-terminus: Acidic juvenile hormone-suppressible protein 1 (624 aa).

Residues 1–18 (MARLVLCALALLVAGGLA) form the signal peptide. Residues Asn75 and Asn478 are each glycosylated (N-linked (GlcNAc...) asparagine).

This sequence belongs to the hemocyanin family.

The protein resides in the secreted. It localises to the extracellular space. The protein is Acidic juvenile hormone-suppressible protein 1 (AJSP-1) of Trichoplusia ni (Cabbage looper).